The primary structure comprises 376 residues: Heat-inducible transcription repressor HrcA (376 aa).

It belongs to the HrcA family.

In terms of biological role, negative regulator of class I heat shock genes (grpE-dnaK-dnaJ and groELS operons). Prevents heat-shock induction of these operons. In Nostoc punctiforme (strain ATCC 29133 / PCC 73102), this protein is Heat-inducible transcription repressor HrcA.